Here is a 174-residue protein sequence, read N- to C-terminus: uncharacterized protein (174 aa).

A helical transmembrane segment spans residues 126–146 (AIDEFIITVIPVVLGSGIPLF).

To B.subtilis YyaP.

It is found in the membrane. This is an uncharacterized protein from Bacillus subtilis (strain 168).